A 337-amino-acid polypeptide reads, in one-letter code: D-lactate dehydrogenase (337 aa).

NAD(+) is bound by residues 156–157 (HI), Asp-176, 207–208 (VP), Asn-213, 234–236 (CSR), and Asp-260. Residue Arg-236 is part of the active site. Glu-265 is an active-site residue. Catalysis depends on His-297, which acts as the Proton donor.

This sequence belongs to the D-isomer specific 2-hydroxyacid dehydrogenase family. In terms of assembly, homodimer.

The enzyme catalyses (R)-lactate + NAD(+) = pyruvate + NADH + H(+). In Lactobacillus helveticus (Lactobacillus suntoryeus), this protein is D-lactate dehydrogenase.